A 184-amino-acid chain; its full sequence is Photosystem I assembly protein Ycf4 (184 aa).

Helical transmembrane passes span 19–39 (ISNF…LLVG) and 57–77 (IVFF…LFIS).

This sequence belongs to the Ycf4 family.

The protein localises to the plastid. It is found in the chloroplast thylakoid membrane. In terms of biological role, seems to be required for the assembly of the photosystem I complex. This is Photosystem I assembly protein Ycf4 from Nicotiana tomentosiformis (Tobacco).